A 257-amino-acid polypeptide reads, in one-letter code: OCIA domain-containing protein 1 (257 aa).

Disordered stretches follow at residues 1 to 20 and 148 to 257; these read MDSP…PHPL and YSDE…SWTD. An OCIA domain is found at 1-110; the sequence is MDSPLNDGSH…MRLPNSHLGE (110 aa). Residues 156 to 170 show a composition bias toward polar residues; it reads GRSTSLNLDTESRPT. The span at 204 to 216 shows a compositional bias: basic and acidic residues; sequence EDLRRRNREEYSK.

It belongs to the OCIAD1 family. Interacts with STAT3 and ARF1. In terms of tissue distribution, expressed in all cells of the primary lymph gland lobe.

It is found in the endosome. Maintains stem cell potency. Involved in endocytic pathways that mediate signaling during hematopoiesis. In Drosophila melanogaster (Fruit fly), this protein is OCIA domain-containing protein 1 (asrij).